The following is a 590-amino-acid chain: Complement component C8 beta chain (590 aa).

A signal peptide spans 1–32 (MKKSWTWTWRVPAELLLLCAALGCLCVPGSRS). Residues 33–54 (ERPRSLEPTVVNRSLAKSRHSR) constitute a propeptide that is removed on maturation. A glycan (N-linked (GlcNAc...) asparagine) is linked at asparagine 44. The TSP type-1 1 domain maps to 64–117 (DCELSSWSSWTMCDPCQKKRYRHAYLLRPSQFNGEPCNFSDKEVEDCATSRPCR). Cystine bridges form between cysteine 65–cysteine 100, cysteine 76–cysteine 110, cysteine 79–cysteine 116, cysteine 122–cysteine 133, cysteine 127–cysteine 146, cysteine 140–cysteine 155, and cysteine 162–cysteine 200. 2 C-linked (Man) tryptophan glycosylation sites follow: tryptophan 70 and tryptophan 73. Residue asparagine 101 is glycosylated (N-linked (GlcNAc...) asparagine). The 38-residue stretch at 120–157 (VRCEGFVCAQTGRCVNRRLLCNGDNDCGDQSDEANCRK) folds into the LDL-receptor class A domain. Ca(2+) contacts are provided by leucine 138, asparagine 141, aspartate 143, aspartate 145, aspartate 151, and glutamate 152. One can recognise an MACPF domain in the interval 158-504 (IYKKCHHEME…EFQGEVSPCR (347 aa)). 4 consecutive transmembrane segments (beta stranded) span residues 252–259 (STFNLGFK), 262–269 (SIFEFGIN), 379–386 (AKNDFKLG), and 392–399 (VYVSLGVS). A disulfide bridge links cysteine 378 with cysteine 403. Threonine 418 is modified (phosphothreonine). Intrachain disulfides connect cysteine 503-cysteine 550, cysteine 505-cysteine 521, cysteine 508-cysteine 523, and cysteine 525-cysteine 534. Positions 505–535 (CAPCQGNGVPVQKGSRCDCICPVGFQGSACE) constitute an EGF-like domain. One can recognise a TSP type-1 2 domain in the interval 545 to 588 (DGRWSCWSRWSSCSGGQKTRRRQCNNPAPQDGGSPCSGPASETL). 2 C-linked (Man) tryptophan glycosylation sites follow: tryptophan 551 and tryptophan 554. A disulfide bond links cysteine 557 and cysteine 590. A disordered region spans residues 557–590 (CSGGQKTRRRQCNNPAPQDGGSPCSGPASETLAC).

It belongs to the complement C6/C7/C8/C9 family. As to quaternary structure, heterotrimer of 3 chains: alpha (C8A), beta (C8B) and gamma (C8G); the alpha and gamma chains are disulfide bonded. Component of the membrane attack complex (MAC), composed of complement C5b, C6, C7, C8A, C8B, C8G and multiple copies of the pore-forming subunit C9. In terms of processing, N-glycosylated; contains one or two bound glycans. Not O-glycosylated.

It is found in the secreted. The protein localises to the target cell membrane. With respect to regulation, membrane attack complex (MAC) assembly is inhibited by CD59, thereby protecting self-cells from damage during complement activation. CD59 acts by binding to the beta-haipins of C8 (C8A and C8B), forming an intermolecular beta-sheet that prevents incorporation of the multiple copies of C9 required for complete formation of the osmolytic pore. MAC assembly is also inhibited by clusterin (CLU) chaperones that inhibit polymerization of C9. In terms of biological role, component of the membrane attack complex (MAC), a multiprotein complex activated by the complement cascade, which inserts into a target cell membrane and forms a pore, leading to target cell membrane rupture and cell lysis. The MAC is initiated by proteolytic cleavage of C5 into complement C5b in response to the classical, alternative, lectin and GZMK complement pathways. The complement pathways consist in a cascade of proteins that leads to phagocytosis and breakdown of pathogens and signaling that strengthens the adaptive immune system. C8B, together with C8A and C8G, inserts into the target membrane, but does not form pores by itself. During MAC assembly, associates with C5b, C6 and C7 to form the C5b8 intermediate complex that inserts into the target membrane and traverses the bilayer increasing membrane rigidity. This Oryctolagus cuniculus (Rabbit) protein is Complement component C8 beta chain (C8B).